The chain runs to 311 residues: Methionyl-tRNA formyltransferase (311 aa).

Residue 112–115 (SLLP) participates in (6S)-5,6,7,8-tetrahydrofolate binding.

This sequence belongs to the Fmt family.

It carries out the reaction L-methionyl-tRNA(fMet) + (6R)-10-formyltetrahydrofolate = N-formyl-L-methionyl-tRNA(fMet) + (6S)-5,6,7,8-tetrahydrofolate + H(+). Attaches a formyl group to the free amino group of methionyl-tRNA(fMet). The formyl group appears to play a dual role in the initiator identity of N-formylmethionyl-tRNA by promoting its recognition by IF2 and preventing the misappropriation of this tRNA by the elongation apparatus. The polypeptide is Methionyl-tRNA formyltransferase (Agrobacterium fabrum (strain C58 / ATCC 33970) (Agrobacterium tumefaciens (strain C58))).